The chain runs to 221 residues: Serotriflin (221 aa).

Residues 19-147 (LDKHNALRRS…SYNYYYVCHY (129 aa)) enclose the SCP domain. The N-linked (GlcNAc...) asparagine glycan is linked to N48. 8 cysteine pairs are disulfide-bonded: C56-C134, C73-C148, C129-C145, C167-C174, C170-C179, C183-C216, C192-C210, and C201-C214. Residues 183 to 216 (CKHVDRYSNCNSLVQQISCQSNNMNTDCPASCFC) form the ShKT domain.

Forms a stable, non-covalent complex with SSP-2.

The protein resides in the secreted. The polypeptide is Serotriflin (Protobothrops flavoviridis (Habu)).